Reading from the N-terminus, the 686-residue chain is Antigen peptide transporter 2 (686 aa).

Residues 1-6 are Lumenal-facing; sequence MRLPDL. The helical transmembrane segment at 7-27 threads the bilayer; that stretch reads RPWTSLLLVDAALLWLLQGPL. Residues 28–56 are Cytoplasmic-facing; that stretch reads GTLLPQGLPGLWLEGTLRLGGLWGLLKLR. A helical membrane pass occupies residues 57–77; that stretch reads GLLGFVGTLLLPLCLATPLTV. The Lumenal segment spans residues 78-98; sequence SLRALVAGASRAPPARVASAP. The chain crosses the membrane as a helical span at residues 99–119; sequence WSWLLVGYGAAGLSWSLWAVL. Residues 120–148 lie on the Cytoplasmic side of the membrane; the sequence is SPPGAQEKEQDQVNNKVLMWRLLKLSRPD. Residues 149-169 traverse the membrane as a helical segment; that stretch reads LPLLVAAFFFLVLAVLGETLI. Residues 152 to 435 form the ABC transmembrane type-1 domain; sequence LVAAFFFLVL…LVYIYGDMLS (284 aa). The Lumenal segment spans residues 170–187; the sequence is PHYSGRVIDILGGDFDPH. Residues 188 to 208 traverse the membrane as a helical segment; that stretch reads AFASAIFFMCLFSFGSSLSAG. Residues 209 to 266 are Cytoplasmic-facing; that stretch reads CRGGCFTYTMSRINLRIREQLFSSLLRQDLGFFQETKTGELNSRLSSDTTLMSNWLPL. The helical transmembrane segment at 267-287 threads the bilayer; it reads NANVLLRSLVKVVGLYGFMLS. Residues 288–293 lie on the Lumenal side of the membrane; sequence ISPRLT. The chain crosses the membrane as a helical span at residues 294–314; that stretch reads LLSLLHMPFTIAAEKVYNTRH. The interval 301-389 is part of the peptide-binding site; it reads PFTIAAEKVY…RRVLHLGVQM (89 aa). At 315 to 374 the chain is on the cytoplasmic side; that stretch reads QEVLREIQDAVARAGQVVREAVGGLQTVRSFGAEEHEVCRYKEALEQCRQLYWRRDLERA. A helical transmembrane segment spans residues 375-395; sequence LYLLVRRVLHLGVQMLMLSCG. The Lumenal segment spans residues 396–408; it reads LQQMQDGELTQGS. Residues 409–429 traverse the membrane as a helical segment; the sequence is LLSFMIYQESVGSYVQTLVYI. Residues 414–433 form a part of the peptide-binding site region; that stretch reads IYQESVGSYVQTLVYIYGDM. At 430–686 the chain is on the cytoplasmic side; sequence YGDMLSNVGA…EGKLQKLAQL (257 aa). The ABC transporter domain maps to 468 to 686; it reads VKFQDVSFAY…EGKLQKLAQL (219 aa). 503 to 510 is a binding site for ATP; the sequence is GPNGSGKS.

The protein belongs to the ABC transporter superfamily. ABCB family. MHC peptide exporter (TC 3.A.1.209) subfamily. Heterodimer of TAP1 and TAP2 (TAP1-TAP2). A component of the peptide loading complex (PLC), interacts via TAPBP with MHCI heterodimer; this interaction mediates peptide-MHCI assembly. Recruits TAPBP in a 1:1 stoichiometry. Interacts with classical MHCI such as HLA-A*02-B2M; this interaction is obligatory for the loading of peptide epitopes. Interacts with non-classical MHCI molecules including HLA-E-B2M and HLA-F-B2M as well as PLC component CALR before the peptide loading. In terms of assembly, (Microbial infection) Interacts with Epstein-Barr virus BLNF2a. As to quaternary structure, (Microbial infection) Interacts with herpes simplex virus US12/ICP47. (Microbial infection) Interacts with adenovirus E3-19K glycoprotein, which binds TAP1-TAP2 and acts as a TAPBP inhibitor, preventing TAP1-TAP2 association with MHCI. It depends on Mg(2+) as a cofactor.

It is found in the endoplasmic reticulum membrane. It carries out the reaction a peptide antigen(in) + ATP + H2O = a peptide antigen(out) + ADP + phosphate + H(+). Its activity is regulated as follows. Inhibited at high ER lumenal peptide concentrations. With respect to regulation, (Microbial infection) Inhibited by herpes simplex virus US12/ICP47 protein, which blocks the peptide-binding site of TAP1-TAP2. (Microbial infection) Inhibited by human cytomegalovirus US6 glycoprotein, which binds to the lumenal side of TAP1-TAP2 complex and inhibits peptide translocation by specifically blocking ATP-binding and preventing TAP1-TAP2 conformational rearrangement induced by peptide binding. In terms of biological role, ABC transporter associated with antigen processing. In complex with TAP1 mediates unidirectional translocation of peptide antigens from cytosol to endoplasmic reticulum (ER) for loading onto MHC class I (MHCI) molecules. Uses the chemical energy of ATP to export peptides against the concentration gradient. During the transport cycle alternates between 'inward-facing' state with peptide binding site facing the cytosol to 'outward-facing' state with peptide binding site facing the ER lumen. Peptide antigen binding to ATP-loaded TAP1-TAP2 induces a switch to hydrolysis-competent 'outward-facing' conformation ready for peptide loading onto nascent MHCI molecules. Subsequently ATP hydrolysis resets the transporter to the 'inward facing' state for a new cycle. Typically transports intracellular peptide antigens of 8 to 13 amino acids that arise from cytosolic proteolysis via IFNG-induced immunoproteasome. Binds peptides with free N- and C-termini, the first three and the C-terminal residues being critical. Preferentially selects peptides having a highly hydrophobic residue at position 3 and hydrophobic or charged residues at the C-terminal anchor. Proline at position 2 has the most destabilizing effect. As a component of the peptide loading complex (PLC), acts as a molecular scaffold essential for peptide-MHCI assembly and antigen presentation. The polypeptide is Antigen peptide transporter 2 (Homo sapiens (Human)).